The sequence spans 211 residues: Probable GTP-binding protein EngB (211 aa).

One can recognise an EngB-type G domain in the interval 26-200 (SGIEVAFAGR…RQKLDNWFST (175 aa)). Residues 34–41 (GRSNAGKS), 61–65 (GRTQL), 79–82 (DLPG), 146–149 (TKAD), and 179–181 (FSS) contribute to the GTP site. Mg(2+)-binding residues include Ser-41 and Thr-63.

It belongs to the TRAFAC class TrmE-Era-EngA-EngB-Septin-like GTPase superfamily. EngB GTPase family. Requires Mg(2+) as cofactor.

Necessary for normal cell division and for the maintenance of normal septation. In Pectobacterium carotovorum subsp. carotovorum (strain PC1), this protein is Probable GTP-binding protein EngB.